The chain runs to 542 residues: Chaperonin GroEL (542 aa).

Residues 29-32, 86-90, Gly-413, and Asp-492 contribute to the ATP site; these read TLGP and DGTTT.

The protein belongs to the chaperonin (HSP60) family. Forms a cylinder of 14 subunits composed of two heptameric rings stacked back-to-back. Interacts with the co-chaperonin GroES.

It is found in the cytoplasm. The enzyme catalyses ATP + H2O + a folded polypeptide = ADP + phosphate + an unfolded polypeptide.. In terms of biological role, together with its co-chaperonin GroES, plays an essential role in assisting protein folding. The GroEL-GroES system forms a nano-cage that allows encapsulation of the non-native substrate proteins and provides a physical environment optimized to promote and accelerate protein folding. The polypeptide is Chaperonin GroEL (Nocardia asteroides).